We begin with the raw amino-acid sequence, 219 residues long: Kynurenine formamidase (219 aa).

W28 serves as a coordination point for substrate. The Zn(2+) site is built by H58, H62, and D64. The active-site Proton donor/acceptor is the H68. Residues H170 and E182 each coordinate Zn(2+).

Belongs to the Cyclase 1 superfamily. KynB family. In terms of assembly, homodimer. Zn(2+) is required as a cofactor.

The catalysed reaction is N-formyl-L-kynurenine + H2O = L-kynurenine + formate + H(+). It participates in amino-acid degradation; L-tryptophan degradation via kynurenine pathway; L-kynurenine from L-tryptophan: step 2/2. Functionally, catalyzes the hydrolysis of N-formyl-L-kynurenine to L-kynurenine, the second step in the kynurenine pathway of tryptophan degradation. In Cupriavidus pinatubonensis (strain JMP 134 / LMG 1197) (Cupriavidus necator (strain JMP 134)), this protein is Kynurenine formamidase.